The chain runs to 185 residues: Ribosome-recycling factor (185 aa).

Belongs to the RRF family.

Its subcellular location is the cytoplasm. In terms of biological role, responsible for the release of ribosomes from messenger RNA at the termination of protein biosynthesis. May increase the efficiency of translation by recycling ribosomes from one round of translation to another. The chain is Ribosome-recycling factor from Xanthomonas oryzae pv. oryzae (strain MAFF 311018).